The sequence spans 352 residues: C-C chemokine receptor type 5 (352 aa).

The Extracellular segment spans residues 1-30 (MDYQVSSPTYDIDYYTSEPCQKINVKQIAA). Tyr-3 is modified (sulfotyrosine). Residues Ser-6 and Ser-7 are each glycosylated (O-linked (GalNAc...) serine). Sulfotyrosine occurs at positions 10, 14, and 15. 2 disulfide bridges follow: Cys-20–Cys-269 and Cys-101–Cys-178. The helical transmembrane segment at 31–58 (RLLPPLYSLVFIFGFVGNILVVLILINC) threads the bilayer. Residues 59-68 (KRLKSMTDIY) lie on the Cytoplasmic side of the membrane. The helical transmembrane segment at 69 to 89 (LLNLAISDLLFLLTVPFWAHY) threads the bilayer. The Extracellular portion of the chain corresponds to 90–102 (AAAQWDFGNTMCQ). A helical membrane pass occupies residues 103 to 124 (LLTGLYFIGFFSGIFFIILLTI). The Cytoplasmic segment spans residues 125–141 (DRYLAIVHAVFALKART). A helical transmembrane segment spans residues 142–166 (VTFGVVTSVITWVVAVFASLPGIIF). The Extracellular portion of the chain corresponds to 167 to 198 (TRSQREGLHYTCSSHFPYSQYQFWKNFQTLKI). The helical transmembrane segment at 199–218 (VILGLVLPLLVMVICYSGIL) threads the bilayer. The Cytoplasmic segment spans residues 219 to 235 (KTLLRCRNEKKRHRAVR). A helical membrane pass occupies residues 236–260 (LIFTIMIVYFLFWAPYNIVLLLNTF). The Extracellular segment spans residues 261–277 (QEFFGLNNCSSSNRLDQ). A helical transmembrane segment spans residues 278–301 (AMQVTETLGMTHCCINPIIYAFVG). Topologically, residues 302 to 352 (EKFRNYLLVFFQKHIAKRFCKCCSIFQQEASERASSVYTRSTGEQEISVGL) are cytoplasmic. 3 S-palmitoyl cysteine lipidation sites follow: Cys-321, Cys-323, and Cys-324. Ser-336, Ser-337, Ser-342, and Ser-349 each carry phosphoserine; by BARK1.

Belongs to the G-protein coupled receptor 1 family. Interacts with PRAF2. Efficient ligand binding to CCL3/MIP-1alpha and CCL4/MIP-1beta requires sulfation, O-glycosylation and sialic acid modifications. Glycosylation on Ser-6 is required for efficient binding of CCL4. Interacts with GRK2. Interacts with ARRB1 and ARRB2. Interacts with CNIH4. Interacts with S100A4; this interaction stimulates T-lymphocyte chemotaxis. Sulfated on at least 2 of the N-terminal tyrosines. Sulfation is required for efficient binding of the chemokines, CCL3 and CCL4. In terms of processing, palmitoylation in the C-terminal is important for cell surface expression. Post-translationally, phosphorylation on serine residues in the C-terminal is stimulated by binding CC chemokines especially by APO-RANTES. O-glycosylated, but not N-glycosylated. Ser-6 appears to be the major site even if Ser-7 may be also O-glycosylated. Also sialylated glycans present which contribute to chemokine binding. Thr-16 and Ser-17 may also be glycosylated and, if so, with small moieties such as a T-antigen.

Its subcellular location is the cell membrane. Receptor for a number of inflammatory CC-chemokines including CCL3/MIP-1-alpha, CCL4/MIP-1-beta and RANTES and subsequently transduces a signal by increasing the intracellular calcium ion level. May play a role in the control of granulocytic lineage proliferation or differentiation. Participates in T-lymphocyte migration to the infection site by acting as a chemotactic receptor. This Cercocebus galeritus (Tana river mangabey) protein is C-C chemokine receptor type 5 (CCR5).